Here is a 590-residue protein sequence, read N- to C-terminus: Fucose-1-phosphate guanylyltransferase (590 aa).

Expressed at highest levels in brain, moderately in testis, ovary and kidney, and weakly in liver, spleen, heart and lung.

The protein localises to the cytoplasm. The catalysed reaction is beta-L-fucose 1-phosphate + GTP + H(+) = GDP-beta-L-fucose + diphosphate. Its function is as follows. Catalyzes the formation of GDP-L-fucose from GTP and L-fucose-1-phosphate. Functions as a salvage pathway to reutilize L-fucose arising from the turnover of glycoproteins and glycolipids. The polypeptide is Fucose-1-phosphate guanylyltransferase (Mus musculus (Mouse)).